Here is a 315-residue protein sequence, read N- to C-terminus: Transaldolase (315 aa).

Residue K128 is the Schiff-base intermediate with substrate of the active site.

The protein belongs to the transaldolase family. Type 1 subfamily. As to quaternary structure, homodimer.

Its subcellular location is the cytoplasm. It catalyses the reaction D-sedoheptulose 7-phosphate + D-glyceraldehyde 3-phosphate = D-erythrose 4-phosphate + beta-D-fructose 6-phosphate. Its pathway is carbohydrate degradation; pentose phosphate pathway; D-glyceraldehyde 3-phosphate and beta-D-fructose 6-phosphate from D-ribose 5-phosphate and D-xylulose 5-phosphate (non-oxidative stage): step 2/3. In terms of biological role, transaldolase is important for the balance of metabolites in the pentose-phosphate pathway. The chain is Transaldolase from Opitutus terrae (strain DSM 11246 / JCM 15787 / PB90-1).